The primary structure comprises 198 residues: FMN-dependent NADH:quinone oxidoreductase (198 aa).

92–95 contributes to the FMN binding site; sequence MWNL.

Belongs to the azoreductase type 1 family. Homodimer. It depends on FMN as a cofactor.

The enzyme catalyses 2 a quinone + NADH + H(+) = 2 a 1,4-benzosemiquinone + NAD(+). The catalysed reaction is N,N-dimethyl-1,4-phenylenediamine + anthranilate + 2 NAD(+) = 2-(4-dimethylaminophenyl)diazenylbenzoate + 2 NADH + 2 H(+). Its function is as follows. Quinone reductase that provides resistance to thiol-specific stress caused by electrophilic quinones. Also exhibits azoreductase activity. Catalyzes the reductive cleavage of the azo bond in aromatic azo compounds to the corresponding amines. This is FMN-dependent NADH:quinone oxidoreductase from Clostridium beijerinckii (strain ATCC 51743 / NCIMB 8052) (Clostridium acetobutylicum).